A 545-amino-acid chain; its full sequence is Chaperonin GroEL 2 (545 aa).

ATP contacts are provided by residues 30 to 33 (TLGP), lysine 51, 87 to 91 (DGTTT), glycine 415, and aspartate 496.

This sequence belongs to the chaperonin (HSP60) family. As to quaternary structure, forms a cylinder of 14 subunits composed of two heptameric rings stacked back-to-back. Interacts with the co-chaperonin GroES.

It localises to the cytoplasm. It carries out the reaction ATP + H2O + a folded polypeptide = ADP + phosphate + an unfolded polypeptide.. Together with its co-chaperonin GroES, plays an essential role in assisting protein folding. The GroEL-GroES system forms a nano-cage that allows encapsulation of the non-native substrate proteins and provides a physical environment optimized to promote and accelerate protein folding. The chain is Chaperonin GroEL 2 from Nitrobacter winogradskyi (strain ATCC 25391 / DSM 10237 / CIP 104748 / NCIMB 11846 / Nb-255).